The sequence spans 257 residues: Imidazole glycerol phosphate synthase subunit HisF (257 aa).

Active-site residues include Asp-11 and Asp-130.

Belongs to the HisA/HisF family. Heterodimer of HisH and HisF.

It localises to the cytoplasm. It carries out the reaction 5-[(5-phospho-1-deoxy-D-ribulos-1-ylimino)methylamino]-1-(5-phospho-beta-D-ribosyl)imidazole-4-carboxamide + L-glutamine = D-erythro-1-(imidazol-4-yl)glycerol 3-phosphate + 5-amino-1-(5-phospho-beta-D-ribosyl)imidazole-4-carboxamide + L-glutamate + H(+). Its pathway is amino-acid biosynthesis; L-histidine biosynthesis; L-histidine from 5-phospho-alpha-D-ribose 1-diphosphate: step 5/9. IGPS catalyzes the conversion of PRFAR and glutamine to IGP, AICAR and glutamate. The HisF subunit catalyzes the cyclization activity that produces IGP and AICAR from PRFAR using the ammonia provided by the HisH subunit. The protein is Imidazole glycerol phosphate synthase subunit HisF of Aliivibrio salmonicida (strain LFI1238) (Vibrio salmonicida (strain LFI1238)).